Here is a 122-residue protein sequence, read N- to C-terminus: Zein-alpha B49 (122 aa).

Belongs to the zein family.

Zeins are major seed storage proteins. This Zea mays (Maize) protein is Zein-alpha B49.